The following is a 530-amino-acid chain: Glucocorticoid modulatory element-binding protein 2 (530 aa).

Residues 81–163 form the SAND domain; sequence EEGENLEAEI…RKIMDSGELD (83 aa). Cysteine 110 is a binding site for Zn(2+). Lysine 136, lysine 140, lysine 143, and arginine 154 together coordinate DNA. Lysine 155 participates in a covalent cross-link: Glycyl lysine isopeptide (Lys-Gly) (interchain with G-Cter in SUMO1); alternate. Residue lysine 155 forms a Glycyl lysine isopeptide (Lys-Gly) (interchain with G-Cter in SUMO2); alternate linkage. Histidine 167, cysteine 171, and cysteine 175 together coordinate Zn(2+). Coiled coils occupy residues 245 to 270 and 304 to 344; these read LLDE…RVQD and QMDR…SNVL. Residue serine 373 is modified to Phosphoserine.

In terms of assembly, homodimer, and heterodimer of GMEB1 and GMEB2. Interacts with the glucocorticoid receptor (NR3C1). May interact with CREB-binding protein (CBP).

The protein resides in the nucleus. Its subcellular location is the cytoplasm. In terms of biological role, trans-acting factor that binds to glucocorticoid modulatory elements (GME) present in the TAT (tyrosine aminotransferase) promoter and increases sensitivity to low concentrations of glucocorticoids. Also binds to the transferrin receptor promoter. This is Glucocorticoid modulatory element-binding protein 2 (Gmeb2) from Mus musculus (Mouse).